A 373-amino-acid chain; its full sequence is MAVGGNNWSMWLRMSRVHLRQITKSLDRTLISLSHGNFSHQYNRNIFVTWWKSLFEASTAFRRASGLTVSPLTRRGIARFDHFRPVPNVSKFASFPRVPKGAPRGLFTNWNMTTSKRLLGQRAYSTSSIKFTQEAVNNMTISLRCFFNSLGGLNQCSHSNSCKAYQNASNVTSKQDHVQPVALKKLSQKDINFIRNLELFKIMKTQNEVVDETSAYYMEKPGSYIEFTISEFNVNGTFSAPLSFLDPSLLADLDEMIRNYKYELKSIYSSVDMILQNYGSLPITFHRNKIRIHFPNSTVVETEKLIAGLNIATGVIYADTSPDISLEGTNLNALVNVDNSGSVWSFVKEPSFPSRSAFSPILSDASYDTYELV.

Required for survival at high temperature during stationary phase. This is Stationary phase protein 5 (SPG5) from Saccharomyces cerevisiae (strain ATCC 204508 / S288c) (Baker's yeast).